The sequence spans 328 residues: Tetraacyldisaccharide 4'-kinase (328 aa).

55–62 serves as a coordination point for ATP; the sequence is TAGGNGKT.

This sequence belongs to the LpxK family.

It catalyses the reaction a lipid A disaccharide + ATP = a lipid IVA + ADP + H(+). It participates in glycolipid biosynthesis; lipid IV(A) biosynthesis; lipid IV(A) from (3R)-3-hydroxytetradecanoyl-[acyl-carrier-protein] and UDP-N-acetyl-alpha-D-glucosamine: step 6/6. In terms of biological role, transfers the gamma-phosphate of ATP to the 4'-position of a tetraacyldisaccharide 1-phosphate intermediate (termed DS-1-P) to form tetraacyldisaccharide 1,4'-bis-phosphate (lipid IVA). The polypeptide is Tetraacyldisaccharide 4'-kinase (Escherichia coli O7:K1 (strain IAI39 / ExPEC)).